The primary structure comprises 222 residues: Putative thymidylate synthase (222 aa).

Residue Cys139 is part of the active site.

The protein belongs to the thymidylate synthase family. Archaeal-type ThyA subfamily. As to quaternary structure, monomer.

The protein localises to the cytoplasm. It functions in the pathway pyrimidine metabolism; dTTP biosynthesis. Functionally, may catalyze the biosynthesis of dTMP using an unknown cosubstrate. The sequence is that of Putative thymidylate synthase from Methanocaldococcus jannaschii (strain ATCC 43067 / DSM 2661 / JAL-1 / JCM 10045 / NBRC 100440) (Methanococcus jannaschii).